The following is a 150-amino-acid chain: Urease accessory protein UreE (150 aa).

Belongs to the UreE family.

Its subcellular location is the cytoplasm. Functionally, involved in urease metallocenter assembly. Binds nickel. Probably functions as a nickel donor during metallocenter assembly. This is Urease accessory protein UreE from Streptococcus salivarius (strain 57.I).